Consider the following 350-residue polypeptide: Beta-ketodecanoyl-[acyl-carrier-protein] synthase (350 aa).

Cys-133 is a catalytic residue.

It belongs to the thiolase-like superfamily. Beta-ketoacyl-ACP synthases family.

The enzyme catalyses octanoyl-CoA + malonyl-[ACP] + H(+) = 3-oxodecanoyl-[ACP] + CO2 + CoA. The protein operates within lipid metabolism; fatty acid biosynthesis. In terms of biological role, catalyzes the condensation of octanoyl-CoA, obtained from exogenously supplied fatty acids via beta-oxidation, with malonyl-[acyl-carrier protein], forming 3-oxodecanoyl-[acyl-carrier protein], an intermediate of the fatty acid elongation cycle that can then be extended to supply all of the cellular fatty acid needs. The enzyme thereby shunts fatty acid degradation intermediates from the beta-oxidation pathway into de novo fatty acid biosynthesis. This is Beta-ketodecanoyl-[acyl-carrier-protein] synthase from Pseudomonas aeruginosa (strain ATCC 15692 / DSM 22644 / CIP 104116 / JCM 14847 / LMG 12228 / 1C / PRS 101 / PAO1).